The chain runs to 328 residues: Apoptosis facilitator Bcl-2-like protein 14 (328 aa).

Residue S44 is modified to Phosphoserine. Positions 213–227 (IVELLKFSGDQLGRE) match the BH3 motif. Positions 309-316 (WVQQNGGW) match the BH2 motif.

This sequence belongs to the Bcl-2 family. Phosphorylated by MELK, leading to inhibit its pro-apoptotic function.

The protein resides in the cytoplasm. Its function is as follows. Plays a role in apoptosis. The chain is Apoptosis facilitator Bcl-2-like protein 14 (Bcl2l14) from Mus musculus (Mouse).